A 271-amino-acid chain; its full sequence is MAGAEDAPGRQPELDEDETAEGRRWGAQHAGARELAALYSPGKRFQEWCSVILCFSLIAHNLVHLLLLARWEHTPLVILGVVAGALVADFLSGLVHWGADTWGSVDLPIVGKAFIRPFREHHIDPTAITRHDFIETNGDNCLVTLLPLLNMAYKFRTQSPETLEQLYPWECFVFCLTIFGTFTNQIHKWSHTYLGLPYWVTVLQDWHVILPRKHHRIHHVAPHETYFCITTGWLNYPLEVIGFWRRLEDLIQGLTGEKPRADDMKWAQKIK.

Residues 1–25 are disordered; sequence MAGAEDAPGRQPELDEDETAEGRRW. Helical transmembrane passes span 48-68, 75-95, and 166-186; these read WCSV…LLLL, PLVI…SGLV, and LYPW…TNQI. A Histidine box-1 motif is present at residues 187-191; sequence HKWSH. A Histidine box-2 motif is present at residues 214-218; that stretch reads HHRIH.

Belongs to the fatty acid desaturase CarF family.

Its subcellular location is the endoplasmic reticulum membrane. The enzyme catalyses a 1-(1,2-saturated alkyl)-2-acyl-sn-glycero-3-phosphoethanolamine + 2 Fe(II)-[cytochrome b5] + O2 + 2 H(+) = a 1-O-(1Z-alkenyl)-2-acyl-sn-glycero-3-phosphoethanolamine + 2 Fe(III)-[cytochrome b5] + 2 H2O. It carries out the reaction a 1-O-hexadecyl-2-acyl-sn-glycero-3-phosphoethanolamine + 2 Fe(II)-[cytochrome b5] + O2 + 2 H(+) = a 1-O-(1Z-hexadecenyl)-2-acyl-sn-glycero-3-phosphoethanolamine + 2 Fe(III)-[cytochrome b5] + 2 H2O. It catalyses the reaction a 1-O-octadecyl-2-acyl-sn-glycero-3-phosphoethanolamine + 2 Fe(II)-[cytochrome b5] + O2 + 2 H(+) = a 1-O-(1Z-octadecenyl)-2-acyl-sn-glycero-3-phosphoethanolamine + 2 Fe(III)-[cytochrome b5] + 2 H2O. The catalysed reaction is a 1-O-(9Z-octadecenyl)-2-acyl-sn-glycero-3-phosphoethanolamine + 2 Fe(II)-[cytochrome b5] + O2 + 2 H(+) = a 1-O-(1Z,9Z-octadecadienyl)-2-acyl-sn-glycero-3-phosphoethanolamine + 2 Fe(III)-[cytochrome b5] + 2 H2O. It participates in lipid metabolism; fatty acid metabolism. Its function is as follows. Plasmanylethanolamine desaturase involved in plasmalogen biogenesis in the endoplasmic reticulum membrane. Plasmalogens are glycerophospholipids with a hydrocarbon chain linked by a vinyl ether bond at the glycerol sn-1 position, and are involved in antioxidative and signaling mechanisms. The protein is Plasmanylethanolamine desaturase 1 of Mus musculus (Mouse).